A 580-amino-acid polypeptide reads, in one-letter code: Efflux pump dotC (580 aa).

Residues 1–34 are compositionally biased toward basic and acidic residues; it reads MSEDHTKADNLSEKDPHSPERSDSSSHEDAHARE. The segment at 1–45 is disordered; that stretch reads MSEDHTKADNLSEKDPHSPERSDSSSHEDAHAREEEESSDDDGAL. N-linked (GlcNAc...) asparagine glycosylation occurs at Asn-10. Residues 35-44 are compositionally biased toward acidic residues; the sequence is EEESSDDDGA. The chain crosses the membrane as a helical span at residues 49 to 69; it reads PASLIAIVMIALSLAVFLSAL. A glycan (N-linked (GlcNAc...) asparagine) is linked at Asn-86. 13 consecutive transmembrane segments (helical) span residues 89-109, 127-147, 153-173, 181-201, 209-229, 242-262, 275-295, 318-338, 348-368, 380-400, 409-429, 444-466, and 519-539; these read AAYT…TPIW, ALFM…MLIT, GAAG…LFSL, GMIG…GGAF, WCFY…FFFL, FAAI…MFLF, SATV…FGLV, ALLV…YLPL, PILA…SAAA, LIPM…LINF, LIIY…APLV, TATF…QVLY, and SPMW…ILLV. Positions 559–580 are disordered; that stretch reads KKAEAERKAERQAKDLEKAQKS.

Belongs to the major facilitator superfamily. TCR/Tet family.

Its subcellular location is the cell membrane. The protein resides in the vacuole membrane. Efflux pump; part of the gene cluster that mediates the biosynthesis of dothistromin (DOTH), a polyketide toxin very similar in structure to the aflatoxin precursor, versicolorin B. One function of dotC may be to transport early-stage dothistromin biosynthetic intermediates from the cytoplasm into vacuoles, thereby affecting the rate of dothistromin production. The protein is Efflux pump dotC of Dothistroma septosporum (strain NZE10 / CBS 128990) (Red band needle blight fungus).